Reading from the N-terminus, the 760-residue chain is U-box domain-containing protein 3 (760 aa).

The stretch at 146 to 217 forms a coiled coil; the sequence is LMELMENALR…EQTEQLIELV (72 aa). The region spanning 237–311 is the U-box domain; that stretch reads SIPPYFRCPL…ASWLEANRIN (75 aa). A compositionally biased stretch (polar residues) spans 424–434; that stretch reads ILGNHQSSSEM. The interval 424–448 is disordered; that stretch reads ILGNHQSSSEMSPKKNLESSNNVNH. ARM repeat units follow at residues 504-543, 545-584, 586-626, 628-666, and 668-707; these read IENR…NLSI, ELNK…SLSV, QVNR…NLSI, HDNK…NLSA, and GEGR…QLCL.

The enzyme catalyses S-ubiquitinyl-[E2 ubiquitin-conjugating enzyme]-L-cysteine + [acceptor protein]-L-lysine = [E2 ubiquitin-conjugating enzyme]-L-cysteine + N(6)-ubiquitinyl-[acceptor protein]-L-lysine.. Its pathway is protein modification; protein ubiquitination. Its function is as follows. Functions as an E3 ubiquitin ligase. The protein is U-box domain-containing protein 3 (PUB3) of Arabidopsis thaliana (Mouse-ear cress).